A 264-amino-acid polypeptide reads, in one-letter code: MYIVTTSFCKIQLQMFTIVSDAAETIKKLFVVFNDLVDIANLSFTNEGLSVQSMDTSHVSLVNLKIGKSYFKDYSIAQEATVGIKISNFVRILDCVGNDEITISFTYDNPDELIVKSEYSDFKMKTIDIETEEMEIPEMDIDVLIDADSNIIQKYLKNMAGFGDTVKIYTQDDVVHMKTAGEIGEVDLQIHDQRVEIKGRLTCEFATRYLMTFAKAAGISKRVVIKLLDDQPGIFEYVFDAESDSKISFFLAPKVKDDGDDEEY.

Residues 75-94 (SIAQEATVGIKISNFVRILD) mediate DNA binding.

Belongs to the PCNA family.

Functionally, sliding clamp subunit. Responsible for tethering the catalytic subunit of DNA polymerase to DNA during high-speed replication. The protein is Probable DNA polymerase sliding clamp 2 of Paramecium bursaria Chlorella virus 1 (PBCV-1).